The following is a 326-amino-acid chain: Adenine deaminase (326 aa).

Zn(2+) is bound by residues histidine 14, histidine 16, and histidine 194. Catalysis depends on glutamate 197, which acts as the Proton donor. Zn(2+) is bound at residue aspartate 275. Residue aspartate 276 coordinates substrate.

Belongs to the metallo-dependent hydrolases superfamily. Adenosine and AMP deaminases family. Adenine deaminase type 2 subfamily. The cofactor is Zn(2+).

The catalysed reaction is adenine + H2O + H(+) = hypoxanthine + NH4(+). Functionally, catalyzes the hydrolytic deamination of adenine to hypoxanthine. Plays an important role in the purine salvage pathway and in nitrogen catabolism. This is Adenine deaminase from Crocosphaera subtropica (strain ATCC 51142 / BH68) (Cyanothece sp. (strain ATCC 51142)).